Here is a 400-residue protein sequence, read N- to C-terminus: Methylamine dehydrogenase heavy chain (400 aa).

The first 27 residues, 1–27 (MTTFQPGRLAGQLAATALLAATCSAFA), serve as a signal peptide directing secretion.

It belongs to the aromatic amine dehydrogenase heavy chain family. In terms of assembly, tetramer of two light and two heavy chains.

The protein localises to the periplasm. It carries out the reaction 2 oxidized [amicyanin] + methylamine + H2O = 2 reduced [amicyanin] + formaldehyde + NH4(+) + 2 H(+). Its function is as follows. Methylamine dehydrogenase carries out the oxidation of methylamine. Electrons are passed from methylamine dehydrogenase to amicyanin. The sequence is that of Methylamine dehydrogenase heavy chain (mauB) from Methylobacillus flagellatus (strain ATCC 51484 / DSM 6875 / VKM B-1610 / KT).